The primary structure comprises 481 residues: Argininosuccinate lyase (481 aa).

Residues 1–17 show a composition bias toward polar residues; sequence MKNAPVDTQSDAATSFE. The tract at residues 1-25 is disordered; it reads MKNAPVDTQSDAATSFEGTAANPQW.

The protein belongs to the lyase 1 family. Argininosuccinate lyase subfamily.

It localises to the cytoplasm. The catalysed reaction is 2-(N(omega)-L-arginino)succinate = fumarate + L-arginine. It participates in amino-acid biosynthesis; L-arginine biosynthesis; L-arginine from L-ornithine and carbamoyl phosphate: step 3/3. This chain is Argininosuccinate lyase, found in Gluconobacter oxydans (strain 621H) (Gluconobacter suboxydans).